Here is a 297-residue protein sequence, read N- to C-terminus: Molybdate/tungstate import ATP-binding protein WtpC (297 aa).

The 225-residue stretch at 2–226 folds into the ABC transporter domain; the sequence is LKVNNLSKIW…PKNKKVAEFL (225 aa). Position 32–39 (32–39) interacts with ATP; it reads GPSGAGKS.

Belongs to the ABC transporter superfamily. Sulfate/tungstate importer (TC 3.A.1.6) family. As to quaternary structure, the complex is composed of two ATP-binding proteins (WtpC), two transmembrane proteins (WtpB) and a solute-binding protein (WtpA).

Its subcellular location is the cell membrane. It catalyses the reaction tungstate(in) + ATP + H2O = tungstate(out) + ADP + phosphate + H(+). In terms of biological role, part of the ABC transporter complex WtpABC involved in molybdate/tungstate import. Responsible for energy coupling to the transport system. This Methanocaldococcus jannaschii (strain ATCC 43067 / DSM 2661 / JAL-1 / JCM 10045 / NBRC 100440) (Methanococcus jannaschii) protein is Molybdate/tungstate import ATP-binding protein WtpC (wtpC).